A 720-amino-acid chain; its full sequence is Protein-glutamine gamma-glutamyltransferase 5 (720 aa).

N-acetylalanine is present on alanine 2. Catalysis depends on residues cysteine 278, histidine 337, and aspartate 360. Asparagine 400, aspartate 402, glutamate 448, and glutamate 453 together coordinate Ca(2+). Residues 470-499 are disordered; the sequence is HGSQRGAELQPSRPTSLSQDSPRSLHTPSL. A compositionally biased stretch (polar residues) spans 481–496; that stretch reads SRPTSLSQDSPRSLHT.

It belongs to the transglutaminase superfamily. Transglutaminase family. The cofactor is Ca(2+). In terms of tissue distribution, expressed in foreskin keratinocytes.

It is found in the cytoplasm. The catalysed reaction is L-glutaminyl-[protein] + L-lysyl-[protein] = [protein]-L-lysyl-N(6)-5-L-glutamyl-[protein] + NH4(+). In terms of biological role, catalyzes the cross-linking of proteins and the conjugation of polyamines to proteins. Contributes to the formation of the cornified cell envelope of keratinocytes. The polypeptide is Protein-glutamine gamma-glutamyltransferase 5 (TGM5) (Homo sapiens (Human)).